A 388-amino-acid polypeptide reads, in one-letter code: Succinate--CoA ligase [ADP-forming] subunit beta (388 aa).

An ATP-grasp domain is found at 9 to 243; sequence KQLFHRYGIP…ESQLAPLEVR (235 aa). ATP-binding positions include Lys-45, 52 to 54, Glu-98, Val-101, and Glu-106; that span reads GRG. The Mg(2+) site is built by Asn-198 and Asp-212. Substrate is bound by residues Asn-263 and 320–322; that span reads GIM.

Belongs to the succinate/malate CoA ligase beta subunit family. In terms of assembly, heterotetramer of two alpha and two beta subunits. Requires Mg(2+) as cofactor.

The catalysed reaction is succinate + ATP + CoA = succinyl-CoA + ADP + phosphate. The enzyme catalyses GTP + succinate + CoA = succinyl-CoA + GDP + phosphate. The protein operates within carbohydrate metabolism; tricarboxylic acid cycle; succinate from succinyl-CoA (ligase route): step 1/1. Succinyl-CoA synthetase functions in the citric acid cycle (TCA), coupling the hydrolysis of succinyl-CoA to the synthesis of either ATP or GTP and thus represents the only step of substrate-level phosphorylation in the TCA. The beta subunit provides nucleotide specificity of the enzyme and binds the substrate succinate, while the binding sites for coenzyme A and phosphate are found in the alpha subunit. This Syntrophotalea carbinolica (strain DSM 2380 / NBRC 103641 / GraBd1) (Pelobacter carbinolicus) protein is Succinate--CoA ligase [ADP-forming] subunit beta.